The primary structure comprises 344 residues: Holliday junction branch migration complex subunit RuvB (344 aa).

The segment at 1-183 (MLDERLISSH…FGISCRLDFY (183 aa)) is large ATPase domain (RuvB-L). Residues Ile22, Arg23, Gly64, Lys67, Thr68, Thr69, 130–132 (EDY), Arg173, Tyr183, and Arg220 each bind ATP. Position 68 (Thr68) interacts with Mg(2+). The small ATPAse domain (RuvB-S) stretch occupies residues 184–254 (TPLELSEIIL…LAKWALEMLE (71 aa)). The interval 257-344 (ECGLDVMDRM…LEGKGLFSDA (88 aa)) is head domain (RuvB-H). Lys312 and Arg317 together coordinate DNA.

This sequence belongs to the RuvB family. As to quaternary structure, homohexamer. Forms an RuvA(8)-RuvB(12)-Holliday junction (HJ) complex. HJ DNA is sandwiched between 2 RuvA tetramers; dsDNA enters through RuvA and exits via RuvB. An RuvB hexamer assembles on each DNA strand where it exits the tetramer. Each RuvB hexamer is contacted by two RuvA subunits (via domain III) on 2 adjacent RuvB subunits; this complex drives branch migration. In the full resolvosome a probable DNA-RuvA(4)-RuvB(12)-RuvC(2) complex forms which resolves the HJ.

Its subcellular location is the cytoplasm. It catalyses the reaction ATP + H2O = ADP + phosphate + H(+). Its function is as follows. The RuvA-RuvB-RuvC complex processes Holliday junction (HJ) DNA during genetic recombination and DNA repair, while the RuvA-RuvB complex plays an important role in the rescue of blocked DNA replication forks via replication fork reversal (RFR). RuvA specifically binds to HJ cruciform DNA, conferring on it an open structure. The RuvB hexamer acts as an ATP-dependent pump, pulling dsDNA into and through the RuvAB complex. RuvB forms 2 homohexamers on either side of HJ DNA bound by 1 or 2 RuvA tetramers; 4 subunits per hexamer contact DNA at a time. Coordinated motions by a converter formed by DNA-disengaged RuvB subunits stimulates ATP hydrolysis and nucleotide exchange. Immobilization of the converter enables RuvB to convert the ATP-contained energy into a lever motion, pulling 2 nucleotides of DNA out of the RuvA tetramer per ATP hydrolyzed, thus driving DNA branch migration. The RuvB motors rotate together with the DNA substrate, which together with the progressing nucleotide cycle form the mechanistic basis for DNA recombination by continuous HJ branch migration. Branch migration allows RuvC to scan DNA until it finds its consensus sequence, where it cleaves and resolves cruciform DNA. This is Holliday junction branch migration complex subunit RuvB from Syntrophomonas wolfei subsp. wolfei (strain DSM 2245B / Goettingen).